Here is a 950-residue protein sequence, read N- to C-terminus: Glycine dehydrogenase (decarboxylating) 1 (950 aa).

The residue at position 704 (K704) is an N6-(pyridoxal phosphate)lysine.

Belongs to the GcvP family. The glycine cleavage system is composed of four proteins: P, T, L and H. The cofactor is pyridoxal 5'-phosphate.

The catalysed reaction is N(6)-[(R)-lipoyl]-L-lysyl-[glycine-cleavage complex H protein] + glycine + H(+) = N(6)-[(R)-S(8)-aminomethyldihydrolipoyl]-L-lysyl-[glycine-cleavage complex H protein] + CO2. The glycine cleavage system catalyzes the degradation of glycine. The P protein binds the alpha-amino group of glycine through its pyridoxal phosphate cofactor; CO(2) is released and the remaining methylamine moiety is then transferred to the lipoamide cofactor of the H protein. This Pseudomonas fluorescens (strain Pf0-1) protein is Glycine dehydrogenase (decarboxylating) 1.